Reading from the N-terminus, the 275-residue chain is Beta-lactamase OXA-15 (275 aa).

The signal sequence occupies residues 1–21 (MAIRIFAILFSIFSLATFAHA). Serine 72 functions as the Acyl-ester intermediate in the catalytic mechanism. Residue lysine 75 is modified to N6-carboxylysine. Residue 210-212 (KTG) participates in substrate binding.

It belongs to the class-D beta-lactamase family.

It catalyses the reaction a beta-lactam + H2O = a substituted beta-amino acid. In terms of biological role, hydrolyzes oxacillin, first-generation cephalosporins and ceftazidime. Does not hydrolyze cefotaxime or carbapenems. The polypeptide is Beta-lactamase OXA-15 (bla) (Pseudomonas aeruginosa).